The primary structure comprises 132 residues: MDRQMLIKEAIQAREGAYVPYSRFQVGAALLMKDGSVIRGANIENASYGLTNCAERTALFKAYSEGRRDVVAIAVVADTKRPVPPCGACRQVMAELCPADTKVYLGNLQGDIQEITVSELLPGAFTAEDMND.

The CMP/dCMP-type deaminase domain maps to Met1 to Glu128. Substrate is bound at residue Asn42–Glu44. Zn(2+) is bound at residue Cys53. The Proton donor role is filled by Glu55. Zn(2+) contacts are provided by Cys86 and Cys89.

It belongs to the cytidine and deoxycytidylate deaminase family. Requires Zn(2+) as cofactor.

It carries out the reaction cytidine + H2O + H(+) = uridine + NH4(+). It catalyses the reaction 2'-deoxycytidine + H2O + H(+) = 2'-deoxyuridine + NH4(+). Functionally, this enzyme scavenges exogenous and endogenous cytidine and 2'-deoxycytidine for UMP synthesis. The chain is Cytidine deaminase (cdd) from Halalkalibacterium halodurans (strain ATCC BAA-125 / DSM 18197 / FERM 7344 / JCM 9153 / C-125) (Bacillus halodurans).